We begin with the raw amino-acid sequence, 278 residues long: Elongation factor Ts (278 aa).

The involved in Mg(2+) ion dislocation from EF-Tu stretch occupies residues 79 to 82 (TDFV).

Belongs to the EF-Ts family.

It localises to the cytoplasm. Functionally, associates with the EF-Tu.GDP complex and induces the exchange of GDP to GTP. It remains bound to the aminoacyl-tRNA.EF-Tu.GTP complex up to the GTP hydrolysis stage on the ribosome. This chain is Elongation factor Ts, found in Borrelia recurrentis (strain A1).